A 1381-amino-acid chain; its full sequence is Major capsid protein (1381 aa).

The protein belongs to the herpesviridae major capsid protein family. Homomultimer. Makes the hexons and eleven out of twelve pentons. Interacts with triplex proteins 1/TRX1 and 2/TRX2; adjacent capsomers are linked together in groups of three by triplexes, heterotrimeric complexes composed of one molecule of TRX1 and two molecules of TRX2. Interacts with scaffold protein; this interaction allows efficient MCP transport to the host nucleus. Interacts with capsid vertex component 2/CVC2. Interacts with the small capsomere-interacting protein/SCP.

Its subcellular location is the virion. It is found in the host nucleus. Functionally, self-assembles to form an icosahedral capsid with a T=16 symmetry, about 200 nm in diameter, and consisting of 150 hexons and 12 pentons (total of 162 capsomers). Hexons form the edges and faces of the capsid and are each composed of six MCP molecules. In contrast, one penton is found at each of the 12 vertices. Eleven of the pentons are MCP pentamers, while the last vertex is occupied by the portal complex. The capsid is surrounded by a layer of proteinaceous material designated the tegument which, in turn, is enclosed in an envelope of host cell-derived lipids containing virus-encoded glycoproteins. The protein is Major capsid protein of Epstein-Barr virus (strain B95-8) (HHV-4).